A 194-amino-acid polypeptide reads, in one-letter code: Flagellin A2 (194 aa).

A propeptide spanning residues 1 to 12 (MFEFITDEDERG) is cleaved from the precursor.

It belongs to the archaeal flagellin family. Glycosylated.

It localises to the archaeal flagellum. Flagellin is the subunit protein which polymerizes to form the filaments of archaeal flagella. The protein is Flagellin A2 (flaA2) of Halobacterium salinarum (strain ATCC 700922 / JCM 11081 / NRC-1) (Halobacterium halobium).